Here is a 159-residue protein sequence, read N- to C-terminus: MDAAGAGAGGKLKKGAAGRKAGGPRKKAVSRSVKAGLQFPVGRIGRYLKKGRYAQRIGTGAPVYLAAVLEYLAAEVLELAGNAARDNKKNRIIPRHVLLAIRNDEELGKLLAGVTIAHGGVLPNINPVLLPKKTAEKAAAAGKEAKSPKKAAGKSPKKA.

Residues 1–10 (MDAAGAGAGG) show a composition bias toward gly residues. Disordered stretches follow at residues 1-29 (MDAA…KKAV) and 136-159 (EKAA…PKKA). Basic residues-rich tracts occupy residues 11–29 (KLKK…KKAV) and 148–159 (PKKAAGKSPKKA). 2 consecutive short sequence motifs (SPKK motif) follow at residues 147 to 150 (SPKK) and 155 to 158 (SPKK).

The protein belongs to the histone H2A family. As to quaternary structure, the nucleosome is a histone octamer containing two molecules each of H2A, H2B, H3 and H4 assembled in one H3-H4 heterotetramer and two H2A-H2B heterodimers. The octamer wraps approximately 147 bp of DNA.

It is found in the nucleus. The protein localises to the chromosome. In terms of biological role, core component of nucleosome. Nucleosomes wrap and compact DNA into chromatin, limiting DNA accessibility to the cellular machineries which require DNA as a template. Histones thereby play a central role in transcription regulation, DNA repair, DNA replication and chromosomal stability. DNA accessibility is regulated via a complex set of post-translational modifications of histones, also called histone code, and nucleosome remodeling. This chain is Probable histone H2A.5, found in Oryza sativa subsp. indica (Rice).